The following is a 517-amino-acid chain: Salicyloyl-CoA 5-hydroxylase (517 aa).

Belongs to the aromatic-ring hydroxylase family. KMO subfamily.

The catalysed reaction is 2-hydroxybenzoyl-CoA + NADH + O2 + H(+) = 2,5-dihydroxybenzoyl-CoA + NAD(+) + H2O. In terms of biological role, involved in the degradation of salicylate via a pathway involving coenzyme A derivative. Catalyzes the aromatic hydroxylation of salicylyl-CoA to yield gentisyl-CoA. This chain is Salicyloyl-CoA 5-hydroxylase, found in Streptomyces sp.